We begin with the raw amino-acid sequence, 255 residues long: Segregation and condensation protein A (255 aa).

This sequence belongs to the ScpA family. As to quaternary structure, component of a cohesin-like complex composed of ScpA, ScpB and the Smc homodimer, in which ScpA and ScpB bind to the head domain of Smc. The presence of the three proteins is required for the association of the complex with DNA.

The protein localises to the cytoplasm. In terms of biological role, participates in chromosomal partition during cell division. May act via the formation of a condensin-like complex containing Smc and ScpB that pull DNA away from mid-cell into both cell halves. The protein is Segregation and condensation protein A of Lactiplantibacillus plantarum (strain ATCC BAA-793 / NCIMB 8826 / WCFS1) (Lactobacillus plantarum).